Here is a 428-residue protein sequence, read N- to C-terminus: Tryptophan synthase beta chain (428 aa).

K100 bears the N6-(pyridoxal phosphate)lysine mark.

Belongs to the TrpB family. In terms of assembly, tetramer of two alpha and two beta chains. It depends on pyridoxal 5'-phosphate as a cofactor.

The enzyme catalyses (1S,2R)-1-C-(indol-3-yl)glycerol 3-phosphate + L-serine = D-glyceraldehyde 3-phosphate + L-tryptophan + H2O. Its pathway is amino-acid biosynthesis; L-tryptophan biosynthesis; L-tryptophan from chorismate: step 5/5. In terms of biological role, the beta subunit is responsible for the synthesis of L-tryptophan from indole and L-serine. The sequence is that of Tryptophan synthase beta chain from Streptomyces avermitilis (strain ATCC 31267 / DSM 46492 / JCM 5070 / NBRC 14893 / NCIMB 12804 / NRRL 8165 / MA-4680).